The chain runs to 328 residues: Adenosine receptor A1 (328 aa).

Residues methionine 1–alanine 10 lie on the Extracellular side of the membrane. A helical membrane pass occupies residues alanine 11–alanine 33. Topologically, residues valine 34–cysteine 46 are cytoplasmic. The chain crosses the membrane as a helical span at residues phenylalanine 47–isoleucine 69. The Extracellular portion of the chain corresponds to asparagine 70 to cysteine 80. Cysteine 80 and cysteine 169 form a disulfide bridge. A helical transmembrane segment spans residues leucine 81–alanine 102. Residues valine 103 to arginine 123 are Cytoplasmic-facing. A helical transmembrane segment spans residues alanine 124 to tryptophan 146. Residues asparagine 147 to serine 176 are Extracellular-facing. A glycan (N-linked (GlcNAc...) asparagine) is linked at asparagine 159. Residues methionine 177–leucine 201 traverse the membrane as a helical segment. At glutamate 202–serine 235 the chain is on the cytoplasmic side. Residues leucine 236 to phenylalanine 259 traverse the membrane as a helical segment. The Extracellular portion of the chain corresponds to cysteine 260 to serine 267. The helical transmembrane segment at isoleucine 268–isoleucine 292 threads the bilayer. Topologically, residues histidine 293–aspartate 328 are cytoplasmic. Cysteine 309 carries S-palmitoyl cysteine lipidation.

Belongs to the G-protein coupled receptor 1 family.

The protein localises to the cell membrane. Receptor for adenosine. The activity of this receptor is mediated by G proteins which inhibit adenylyl cyclase. The polypeptide is Adenosine receptor A1 (ADORA1) (Oryctolagus cuniculus (Rabbit)).